The sequence spans 1253 residues: Myosin heavy chain 95F (1253 aa).

The region spanning 3–54 (EDTQLVWVRDAAEGYIQGRITEIGAKEFEVTPTDRKYPKRTCHFDDIHSSCD) is the Myosin N-terminal SH3-like domain. The Myosin motor domain occupies 57 to 766 (QDHDDNCELM…KFVEFDRIMR (710 aa)). 151-158 (GESGAGKT) provides a ligand contact to ATP. The actin-binding stretch occupies residues 647–666 (GELMEKLEQNGTNFIRCIKP). One can recognise an IQ domain in the interval 808 to 837 (RNKCVLIAQRIARGFLARKQHRPRYQGIGK). The stretch at 900–1022 (ANMNKLTVDL…LRLANESNGQ (123 aa)) forms a coiled coil. A hydrophobic region region spans residues 1187–1193 (PILLVAG). The segment at 1233–1253 (AYKNLGAAKPNGPAAAMQKQQ) is disordered.

It belongs to the TRAFAC class myosin-kinesin ATPase superfamily. Myosin family. As to expression, isoform B is present at a higher level in the head and gonads than in the thoraxes. Isoform 145 kDa is found only in the head. CLIP-190 and jar are coexpressed at several times in development and in a number of tissues, including embryonic axonal neuron processes and posterior pole.

It localises to the cytoplasm. The protein resides in the cytoskeleton. Functionally, myosin is a protein that binds to actin and has ATPase activity that is activated by actin. Together CLIP-190 and jar may coordinate the interaction between the actin and microtubule cytoskeleton. May link endocytic vesicles to microtubules and may be involved in transport in the early embryo and in the dynamic process of dorsal closure. It is believed that its function changes during the life cycle. This chain is Myosin heavy chain 95F (jar), found in Drosophila melanogaster (Fruit fly).